The chain runs to 160 residues: Epithelial membrane protein 1 (160 aa).

Residues 1-21 (MLVLLAGLFVVHIATAIMLFV) form a helical membrane-spanning segment. Asn-35 and Asn-43 each carry an N-linked (GlcNAc...) asparagine glycan. Transmembrane regions (helical) follow at residues 67–87 (FMILSIIFSIISLVVFVFQLF) and 95–115 (FFLSGSTMLVCWLCILVGVSI). Residue Asn-128 is glycosylated (N-linked (GlcNAc...) asparagine). Residues 137-157 (FILTWICFCFSFIIGILYMVL) form a helical membrane-spanning segment.

The protein belongs to the PMP-22/EMP/MP20 family.

The protein resides in the membrane. In Mus musculus (Mouse), this protein is Epithelial membrane protein 1 (Emp1).